A 600-amino-acid polypeptide reads, in one-letter code: MSTLTRFSVQPLSTMTRRLADVASARREPDLVIQGARVLSTYSERFLDGREVWISGGRIAAVKPAGSYRGGSAKLYDARGGIIAPGLVDPHIHIESSMVTACAYAEAALLNGTTTIFCDSHEIGNVMDVAGVEAMLEDARQAPLSIFLTVPSTVPATTPDLETAGGDLTPDKIAALFDKWPEAVALGEKMDFVPVAMGDERSHAILAAALGRGRPVSGHVYGREFVAAYAASGVTDTHEAIDRGIADDLLEAGVWIFLRGGPPTTPWHSLPQAIKTITELGASHKRVAVCTDDRDAEDLLAFGLDWVTREAVKYGMRPEEAWAMGSLHGATRFGMEGEIGGLGGGRRADLVLLSDDLTPVSTWYGGKLVVDSKKITPILDEALSKPYRYPDAAYHTVKLPKNLKLTPDLPTETVVAHTIKTELPGITLGHVTVTLEPANDWQAHFDKHDLCFVTVVERHGKSAGNVAHGLLNGFGLRQGAVASSVGHDSHNIIVAGTNAADMQVALDAIEEKQGGVCVVMDGKVTAMVPLPIAGLLSDKRVHQVADEVKALKLEWEKAGCTIAYMGFNLIPLSVIPEIRITDKGLVLVPEMVISPLFEKA.

This sequence belongs to the metallo-dependent hydrolases superfamily. Adenine deaminase family. The cofactor is Mn(2+).

It carries out the reaction adenine + H2O + H(+) = hypoxanthine + NH4(+). The polypeptide is Adenine deaminase 3 (Rhizobium johnstonii (strain DSM 114642 / LMG 32736 / 3841) (Rhizobium leguminosarum bv. viciae)).